Consider the following 512-residue polypeptide: 2,3-bisphosphoglycerate-independent phosphoglycerate mutase (512 aa).

Mn(2+) contacts are provided by Asp-11 and Ser-61. Ser-61 serves as the catalytic Phosphoserine intermediate. Substrate-binding positions include His-122, 152 to 153, Arg-184, Arg-190, 259 to 262, and Lys-332; these read RD and RADR. Mn(2+)-binding residues include Asp-399, His-403, Asp-440, His-441, and His-459.

It belongs to the BPG-independent phosphoglycerate mutase family. As to quaternary structure, monomer. Mn(2+) serves as cofactor.

It catalyses the reaction (2R)-2-phosphoglycerate = (2R)-3-phosphoglycerate. It functions in the pathway carbohydrate degradation; glycolysis; pyruvate from D-glyceraldehyde 3-phosphate: step 3/5. Its function is as follows. Catalyzes the interconversion of 2-phosphoglycerate and 3-phosphoglycerate. The sequence is that of 2,3-bisphosphoglycerate-independent phosphoglycerate mutase from Francisella tularensis subsp. tularensis (strain FSC 198).